The following is a 284-amino-acid chain: MKVFILALLALTATTAIAQLETTCSQGFGQSQQQQQPGQRQLLEQMKPCVAFLQQKCSPLRMPFLQTQVEQLSSCQIVQYQCCQQLAQIPERTRCHAIHIVVEAIIQQQSQQQWQEPQQQAQHKSMRMLLENLSLMCNIYVPVQCQQQQQLGQQQQQQLQEQLTPCTTFLQQQCSPVTVPFPQIPVDQPTSCQNVQHQCCRQLSQIPEQFRCQAIHNVAEAIRQQQPQQQWQGMYQPQQPAQLESIRMSLQALRSMCNIYIPVQCPAPTTYNIPLVATYTGGAC.

Positions 1 to 18 (MKVFILALLALTATTAIA) are cleaved as a signal peptide.

The protein belongs to the prolamin family. In terms of processing, contains disulfide bonds.

Functionally, seed storage protein. Might be integrated via inter-chain disulfide bonds within the glutenin polymer. This is Avenin-like b3 from Triticum aestivum (Wheat).